Reading from the N-terminus, the 740-residue chain is Melanoma-associated antigen D4 (740 aa).

The span at 1-11 (MAEGSYRKESE) shows a compositional bias: basic and acidic residues. 4 disordered regions span residues 1–27 (MAEG…EVGE), 139–208 (ATHQ…GPST), 242–298 (PAGV…ALAK), and 321–377 (IPEP…ASQP). The span at 14–27 (NVEDMDEGSDEVGE) shows a compositional bias: acidic residues. Polar residues-rich tracts occupy residues 141–155 (HQAS…TSAA) and 162–175 (PETS…SRML). Low complexity predominate over residues 185-207 (APARSPQPQTSSQAQEAAAEGPS). Residues 321–337 (IPEPESAAATSQQSAEP) show a composition bias toward low complexity. A compositionally biased stretch (acidic residues) spans 354-363 (DEYESGEEER). The MAGE domain occupies 414–612 (LQERANKLVK…REWRAHFLEA (199 aa)). The tract at residues 697-722 (WRAGVSSGTNGAASASMLDGPSTSST) is disordered.

Interacts with TRIM27.

Its function is as follows. May enhance ubiquitin ligase activity of RING-type zinc finger-containing E3 ubiquitin-protein ligases. Proposed to act through recruitment and/or stabilization of the Ubl-conjugating enzyme (E2) at the E3:substrate complex. This is Melanoma-associated antigen D4 (MAGED4) from Bos taurus (Bovine).